A 221-amino-acid chain; its full sequence is Ribosomal RNA large subunit methyltransferase E (221 aa).

Positions 60, 62, 89, 105, and 134 each coordinate S-adenosyl-L-methionine. Lys174 (proton acceptor) is an active-site residue.

It belongs to the class I-like SAM-binding methyltransferase superfamily. RNA methyltransferase RlmE family.

It is found in the cytoplasm. The enzyme catalyses uridine(2552) in 23S rRNA + S-adenosyl-L-methionine = 2'-O-methyluridine(2552) in 23S rRNA + S-adenosyl-L-homocysteine + H(+). In terms of biological role, specifically methylates the uridine in position 2552 of 23S rRNA at the 2'-O position of the ribose in the fully assembled 50S ribosomal subunit. In Cupriavidus taiwanensis (strain DSM 17343 / BCRC 17206 / CCUG 44338 / CIP 107171 / LMG 19424 / R1) (Ralstonia taiwanensis (strain LMG 19424)), this protein is Ribosomal RNA large subunit methyltransferase E.